The following is a 556-amino-acid chain: Testis-specific protein 10-interacting protein (556 aa).

The span at 1 to 20 shows a compositional bias: polar residues; sequence MGQETNMLNAHQQLVRTSSG. Disordered regions lie at residues 1–102 and 180–320; these read MGQE…SPRK and CTSI…GPWD. The segment covering 75–85 has biased composition (basic residues); that stretch reads KDRRLRGRNKK. Composition is skewed to acidic residues over residues 213 to 225 and 246 to 260; these read EPEESEPEGLGAE and LEEEQFSEATEEAED. Residues 266–278 show a composition bias toward basic residues; it reads PWRRRTSSRRKGR. The span at 304–320 shows a compositional bias: basic and acidic residues; that stretch reads EPQRRKPRAKELEGPWD. Residues 387–463 are a coiled coil; it reads LRAWELQQRE…ELQGIQHRVQ (77 aa). The disordered stretch occupies residues 503 to 556; the sequence is AGKRDMEGAPRRHRSHRSVGARMEPSSQSPPKMEPTGSQADQHFAPNPDQELSP. Over residues 527-543 the composition is skewed to polar residues; that stretch reads PSSQSPPKMEPTGSQAD.

The protein is Testis-specific protein 10-interacting protein (TSGA10IP) of Bos taurus (Bovine).